An 88-amino-acid polypeptide reads, in one-letter code: Small ribosomal subunit protein bS20 (88 aa).

This sequence belongs to the bacterial ribosomal protein bS20 family.

Functionally, binds directly to 16S ribosomal RNA. This Clostridioides difficile (strain 630) (Peptoclostridium difficile) protein is Small ribosomal subunit protein bS20.